The following is a 406-amino-acid chain: LIM/homeobox protein Lhx1 (406 aa).

2 LIM zinc-binding domains span residues 4–54 and 63–117; these read CAGC…CKND and CAGC…CKED. Over residues 125–136 the composition is skewed to polar residues; the sequence is AKENSLHSATTG. Disordered regions lie at residues 125 to 187 and 296 to 372; these read AKEN…RTTI and FPQG…SAEV. The span at 137–148 shows a compositional bias: low complexity; that stretch reads SDPSLSPDSQDP. A compositionally biased stretch (basic and acidic residues) spans 151–167; the sequence is DDAKDSESANVSDKETG. Residues 180 to 239 constitute a DNA-binding region (homeobox); it reads RRGPRTTIKAKQLETLKAAFAATPKPTRHIREQLAQETGLNMRVIQVWFQNRRSKERRMK.

It is found in the nucleus. Transcriptional factor that defines subclasses of motoneurons that segregate into columns in the spinal cord and select distinct axon pathways. Acts in conjunction with ISL-2. In Gallus gallus (Chicken), this protein is LIM/homeobox protein Lhx1 (LHX1).